We begin with the raw amino-acid sequence, 189 residues long: Glucose-6-phosphate isomerase (189 aa).

Fe cation is bound by residues histidine 88, histidine 90, glutamate 97, and histidine 136.

The protein belongs to the archaeal-type GPI family. Homodimer. Fe cation serves as cofactor.

It is found in the cytoplasm. The catalysed reaction is alpha-D-glucose 6-phosphate = beta-D-fructose 6-phosphate. The protein operates within carbohydrate degradation; glycolysis; D-glyceraldehyde 3-phosphate and glycerone phosphate from D-glucose: step 2/4. The sequence is that of Glucose-6-phosphate isomerase (pgiA) from Pyrococcus horikoshii (strain ATCC 700860 / DSM 12428 / JCM 9974 / NBRC 100139 / OT-3).